A 51-amino-acid polypeptide reads, in one-letter code: Glutamine synthetase (51 aa).

The protein belongs to the glutamine synthetase family. In terms of assembly, homooctamer.

The protein resides in the cytoplasm. The enzyme catalyses L-glutamate + NH4(+) + ATP = L-glutamine + ADP + phosphate + H(+). This Vitis sp. (Grape) protein is Glutamine synthetase.